A 744-amino-acid polypeptide reads, in one-letter code: Eukaryotic translation initiation factor 3 subunit B (744 aa).

The interval 1–21 (MAPSFDHLPDPEEDEYDEEEL) is disordered. A compositionally biased stretch (acidic residues) spans 11–21 (PEEDEYDEEEL). One can recognise an RRM domain in the interval 40–126 (TFVVIDGLPE…HTLRVNKLTD (87 aa)). WD repeat units lie at residues 193-232 (DRQH…RQKR), 234-290 (AHPF…PLRS), 307-348 (PIKR…LLDK), and 577-622 (ADHY…LREE).

It belongs to the eIF-3 subunit B family. As to quaternary structure, component of the eukaryotic translation initiation factor 3 (eIF-3) complex.

It localises to the cytoplasm. RNA-binding component of the eukaryotic translation initiation factor 3 (eIF-3) complex, which is involved in protein synthesis of a specialized repertoire of mRNAs and, together with other initiation factors, stimulates binding of mRNA and methionyl-tRNAi to the 40S ribosome. The eIF-3 complex specifically targets and initiates translation of a subset of mRNAs involved in cell proliferation. The protein is Eukaryotic translation initiation factor 3 subunit B (prt1) of Botryotinia fuckeliana (strain B05.10) (Noble rot fungus).